Consider the following 441-residue polypeptide: Protein cortex (441 aa).

7 WD repeats span residues 110-148 (SITSFPDVLDWSHDDILVAALGKKYHKWSWRTQSPVDQG), 149-187 (QTMFDIRCCKFDPKGKRLLLGTDMRVEVHNELSKCQFVQ), 193-233 (IQIC…KSLV), 235-276 (IEGA…RFMK), 277-320 (TNEI…KLRQ), 345-379 (SLWSLDVNVPYPKSSELVVMSNFDTVVDHWGESHT), and 380-420 (GLNR…KILA). A D-box motif is present at residues 379–390 (TGLNRIRTMVFS).

Belongs to the WD repeat CORT family.

The protein resides in the cytoplasm. Functionally, controls wing pigmentation patterning, possibly by regulating scale cell development. Probably acts as an activator of the anaphase promoting complex/cyclosome (APC/C) that promotes the ubiquitin ligase activity and substrate specificity of the APC/C. This chain is Protein cortex, found in Biston betularia (Pepper-and-salt geometer moth).